The chain runs to 262 residues: 5'-nucleotidase SurE (262 aa).

Positions 11, 12, 43, and 101 each coordinate a divalent metal cation.

The protein belongs to the SurE nucleotidase family. The cofactor is a divalent metal cation.

It is found in the cytoplasm. It carries out the reaction a ribonucleoside 5'-phosphate + H2O = a ribonucleoside + phosphate. Its function is as follows. Nucleotidase that shows phosphatase activity on nucleoside 5'-monophosphates. This is 5'-nucleotidase SurE from Prochlorococcus marinus (strain NATL2A).